The following is a 339-amino-acid chain: Phosphate acyltransferase (339 aa).

It belongs to the PlsX family. Homodimer. Probably interacts with PlsY.

Its subcellular location is the cytoplasm. It catalyses the reaction a fatty acyl-[ACP] + phosphate = an acyl phosphate + holo-[ACP]. The protein operates within lipid metabolism; phospholipid metabolism. In terms of biological role, catalyzes the reversible formation of acyl-phosphate (acyl-PO(4)) from acyl-[acyl-carrier-protein] (acyl-ACP). This enzyme utilizes acyl-ACP as fatty acyl donor, but not acyl-CoA. This Clostridium perfringens (strain SM101 / Type A) protein is Phosphate acyltransferase.